The chain runs to 64 residues: UPF0434 protein BAB2_0345 (64 aa).

Belongs to the UPF0434 family.

The polypeptide is UPF0434 protein BAB2_0345 (Brucella abortus (strain 2308)).